Reading from the N-terminus, the 163-residue chain is Ubiquitin-like protein 1-ribosomal protein eS31 fusion protein (163 aa).

Positions 1–70 (MVFVKTLHRT…IYVNLELLGG (70 aa)) constitute a Ubiquitin-like domain. A Glycyl lysine isopeptide (Gly-Lys) (interchain with K-? in acceptor proteins) cross-link involves residue Gly70. Residues 115 to 138 (CQQPSCGGGVFMAQHANRHYCGRC) form a C4-type zinc finger.

This sequence in the N-terminal section; belongs to the ubiquitin family. The protein in the C-terminal section; belongs to the eukaryotic ribosomal protein eS31 family.

The polypeptide is Ubiquitin-like protein 1-ribosomal protein eS31 fusion protein (Caenorhabditis elegans).